Reading from the N-terminus, the 382-residue chain is Gap junction alpha-1 protein (382 aa).

The Cytoplasmic portion of the chain corresponds to 2–23 (GDWSALGKLLDKVQAYSTAGGK). Serine 5 carries the phosphoserine modification. The chain crosses the membrane as a helical span at residues 24-44 (VWLSVLFIFRILLLGTAVESA). Residues 45–76 (WGDEQSAFRCNTQQPGCENVCYDKSFPISHVR) are Extracellular-facing. 2 cysteine pairs are disulfide-bonded: cysteine 54/cysteine 192 and cysteine 187/cysteine 198. The helical transmembrane segment at 77 to 97 (FWVLQIIFVSVPTLLYLAHVF) threads the bilayer. The Cytoplasmic segment spans residues 98–155 (YVMRKEEKLNKKEEELKVAQTDGVNVEMHLKQIEIKKFKYGIEEHGKVKMRGGLLRTY). Lysine 144 participates in a covalent cross-link: Glycyl lysine isopeptide (Lys-Gly) (interchain with G-Cter in SUMO). A helical membrane pass occupies residues 156–176 (IISILFKSIFEVAFLLIQWYI). Over 177–207 (YGFSLSAVYTCKRDPCPHQVDCFLSRPTEKT) the chain is Extracellular. A helical transmembrane segment spans residues 208–228 (IFIIFMLVVSLVSLALNIIEL). Residues 229 to 382 (FYVFFKGVKD…SRPRPDDLEI (154 aa)) lie on the Cytoplasmic side of the membrane. Lysine 237 is covalently cross-linked (Glycyl lysine isopeptide (Lys-Gly) (interchain with G-Cter in SUMO)). The interaction with NOV stretch occupies residues 244-382 (SDPYHATSGA…SRPRPDDLEI (139 aa)). Tyrosine 247 is subject to Phosphotyrosine. Residues serine 255 and serine 262 each carry the phosphoserine modification. The interaction with UBQLN4 stretch occupies residues 264–382 (KYAYFNGCSS…SRPRPDDLEI (119 aa)). The residue at position 271 (cysteine 271) is an S-nitrosocysteine. At threonine 275 the chain carries Phosphothreonine. The segment at 279 to 300 (SPMSPPGYKPVTGDRNNSSCRN) is disordered. Phosphoserine is present on residues serine 306 and serine 314. Residues 317 to 332 (QNRMGQAGSTISNSHA) are compositionally biased toward polar residues. The disordered stretch occupies residues 317–382 (QNRMGQAGST…SRPRPDDLEI (66 aa)). Serine 325 is subject to Phosphoserine; by CK1. A Phosphothreonine modification is found at threonine 326. Phosphoserine; by CK1 is present on residues serine 328 and serine 330. 2 positions are modified to phosphoserine: serine 344 and serine 365. Residues 362–374 (RPSSRASSRASSR) show a composition bias toward low complexity. Position 368 is a phosphoserine; by PKC/PRKCG and PKC/PRKCD (serine 368). Phosphoserine occurs at positions 369 and 373.

The protein belongs to the connexin family. Alpha-type (group II) subfamily. As to quaternary structure, a connexon is composed of a hexamer of connexins. Interacts with SGSM3. Interacts with RIC1/CIP150. Interacts with CNST and CSNK1D. Interacts (via C-terminus) with TJP1. Interacts (via C-terminus) with SRC (via SH3 domain). Interacts (not ubiquitinated) with UBQLN4 (via UBA domain). Interacts with NOV. Interacts with TMEM65. Interacts with ANK3/ANKG and PKP2. Phosphorylation at Ser-325, Ser-328 and Ser-330 by CK1 modulates gap junction assembly. Phosphorylated at Ser-368 by PRKCG; phosphorylation induces disassembly of gap junction plaques and inhibition of gap junction activity. Phosphorylation at Ser-368 by PRKCD triggers its internalization into small vesicles leading to proteasome-mediated degradation. Post-translationally, sumoylated with SUMO1, SUMO2 and SUMO3, which may regulate the level of functional Cx43 gap junctions at the plasma membrane. May be desumoylated by SENP1 or SENP2. In terms of processing, S-nitrosylation at Cys-271 is enriched at the muscle endothelial gap junction in arteries, it augments channel permeability and may regulate of smooth muscle cell to endothelial cell communication. Acetylated in the developing cortex; leading to delocalization from the cell membrane.

Its subcellular location is the cell membrane. It is found in the cell junction. The protein resides in the gap junction. The protein localises to the endoplasmic reticulum. Gap junction protein that acts as a regulator of bladder capacity. A gap junction consists of a cluster of closely packed pairs of transmembrane channels, the connexons, through which materials of low MW diffuse from one cell to a neighboring cell. May play a critical role in the physiology of hearing by participating in the recycling of potassium to the cochlear endolymph. Negative regulator of bladder functional capacity: acts by enhancing intercellular electrical and chemical transmission, thus sensitizing bladder muscles to cholinergic neural stimuli and causing them to contract. May play a role in cell growth inhibition through the regulation of NOV expression and localization. Plays an essential role in gap junction communication in the ventricles. This Macaca fascicularis (Crab-eating macaque) protein is Gap junction alpha-1 protein (GJA1).